We begin with the raw amino-acid sequence, 159 residues long: MRISVEVINRQRKIRVASKKVISRIKKIVSFLYETKDKKLSKITVKNPAFLLISVIFVGDQKMKELNSKYRGKNSVTDILSFPYLENEPSGNLFLGEIIINPKKVFSQAKQYNKTFWQELDRILAHGILHLLGYDHEVSDSEARKMRKLEQKILSNLKP.

Residues His126, His130, and His136 each coordinate Zn(2+).

This sequence belongs to the endoribonuclease YbeY family. It depends on Zn(2+) as a cofactor.

It localises to the cytoplasm. In terms of biological role, single strand-specific metallo-endoribonuclease involved in late-stage 70S ribosome quality control and in maturation of the 3' terminus of the 16S rRNA. The polypeptide is Endoribonuclease YbeY (Thermodesulfovibrio yellowstonii (strain ATCC 51303 / DSM 11347 / YP87)).